A 135-amino-acid chain; its full sequence is uncharacterized protein (135 aa).

This is an uncharacterized protein from Aquifex aeolicus (strain VF5).